The following is a 201-amino-acid chain: Histidine biosynthesis bifunctional protein HisIE (201 aa).

The segment at 1–111 (MKINWQKVDN…EKTTQPDWIF (111 aa)) is phosphoribosyl-AMP cyclohydrolase. The phosphoribosyl-ATP pyrophosphohydrolase stretch occupies residues 112-201 (LSKLERLIAS…IHKLKERHTK (90 aa)).

It in the N-terminal section; belongs to the PRA-CH family. This sequence in the C-terminal section; belongs to the PRA-PH family.

It is found in the cytoplasm. It carries out the reaction 1-(5-phospho-beta-D-ribosyl)-ATP + H2O = 1-(5-phospho-beta-D-ribosyl)-5'-AMP + diphosphate + H(+). The catalysed reaction is 1-(5-phospho-beta-D-ribosyl)-5'-AMP + H2O = 1-(5-phospho-beta-D-ribosyl)-5-[(5-phospho-beta-D-ribosylamino)methylideneamino]imidazole-4-carboxamide. The protein operates within amino-acid biosynthesis; L-histidine biosynthesis; L-histidine from 5-phospho-alpha-D-ribose 1-diphosphate: step 2/9. Its pathway is amino-acid biosynthesis; L-histidine biosynthesis; L-histidine from 5-phospho-alpha-D-ribose 1-diphosphate: step 3/9. This is Histidine biosynthesis bifunctional protein HisIE (hisI) from Pasteurella multocida (strain Pm70).